A 571-amino-acid chain; its full sequence is Germacrene B synthase TPS16CC (571 aa).

Residues Arg-287, Asp-324, Asp-328, Arg-465, and Asp-468 each coordinate (2E,6E)-farnesyl diphosphate. Asp-324 and Asp-328 together coordinate Mg(2+). Residues 324 to 328 carry the DDXXD motif motif; the sequence is DDIYD. Mg(2+)-binding residues include Asp-468, Ser-472, and Glu-476.

Belongs to the terpene synthase family. Tpsb subfamily. The cofactor is Mg(2+). It depends on Mn(2+) as a cofactor. In terms of tissue distribution, highly expressed in glandular trichomes.

The enzyme catalyses (2E,6E)-farnesyl diphosphate = (1E,4E)-germacrene B + diphosphate. The protein operates within secondary metabolite biosynthesis; terpenoid biosynthesis. Its function is as follows. Involved in sesquiterpene olefins biosynthesis, constituants of cannabinoids and terpenoids-rich resins. Catalyzes mainly the conversion of (2E)-farnesyl diphosphate to germacrene B, which is spontaneously converted to gamma-elemene as a thermal degradation product. The sequence is that of Germacrene B synthase TPS16CC from Cannabis sativa (Hemp).